We begin with the raw amino-acid sequence, 256 residues long: Putative transcription factor 001R (256 aa).

Functionally, transcription activation. In Frog virus 3 (isolate Goorha) (FV-3), this protein is Putative transcription factor 001R.